The sequence spans 310 residues: Ornithine carbamoyltransferase (310 aa).

Carbamoyl phosphate contacts are provided by residues 58-61, Gln-85, Arg-109, and 136-139; these read STRT and HPCQ. Residues Asn-167, Asp-227, and 231-232 contribute to the L-ornithine site; that span reads SM. Residues 266–267 and Arg-294 each bind carbamoyl phosphate; that span reads CL.

This sequence belongs to the aspartate/ornithine carbamoyltransferase superfamily. OTCase family.

Its subcellular location is the cytoplasm. It catalyses the reaction carbamoyl phosphate + L-ornithine = L-citrulline + phosphate + H(+). Its pathway is amino-acid biosynthesis; L-arginine biosynthesis; L-arginine from L-ornithine and carbamoyl phosphate: step 1/3. In terms of biological role, reversibly catalyzes the transfer of the carbamoyl group from carbamoyl phosphate (CP) to the N(epsilon) atom of ornithine (ORN) to produce L-citrulline. This Rhodopseudomonas palustris (strain ATCC BAA-98 / CGA009) protein is Ornithine carbamoyltransferase.